The chain runs to 372 residues: MENTVQNKPIIELRSITKSYGSNTIIKDFNLTINNGEFLTILGPSGCGKTTVLRLLAGLEELDSGNIILDGEDITNVPAEKRHVNTVFQSYALFPHMTIFENVAFGLRMQKVPEAEIKPRVLEALRMVQLEEMADRKPTQLSGGQQQRIAIARAVVNKPKVLLLDESLSALDYKLRKQMQYELKVLQRQLGITFIFVTHDQEEAITMSDRIVLLRKGKIAQDGSPREIYEEPANLFVARFIGEINVFDATVIERKSENVVLANVEGRVCDIYTDIPVKKDQQLQVLLRPEDIVIKELDEHEHSKAIIGHIIDRTYKGMTLESTVEFEQNGKRGLVSEFFNEDDPHMDHSIGQRVGITWHEGWEVVLNDEDNQ.

One can recognise an ABC transporter domain in the interval 11–241 (IELRSITKSY…PANLFVARFI (231 aa)). 43–50 (GPSGCGKT) is a binding site for ATP.

The protein belongs to the ABC transporter superfamily. Spermidine/putrescine importer (TC 3.A.1.11.1) family. In terms of assembly, the complex is composed of two ATP-binding proteins (PotA), two transmembrane proteins (PotB and PotC) and a solute-binding protein (PotD).

It is found in the cell inner membrane. It carries out the reaction ATP + H2O + polyamine-[polyamine-binding protein]Side 1 = ADP + phosphate + polyamineSide 2 + [polyamine-binding protein]Side 1.. In terms of biological role, part of the ABC transporter complex PotABCD involved in spermidine/putrescine import. Responsible for energy coupling to the transport system. The polypeptide is Spermidine/putrescine import ATP-binding protein PotA (Aggregatibacter actinomycetemcomitans (Actinobacillus actinomycetemcomitans)).